Reading from the N-terminus, the 329-residue chain is Calcium homeostasis modulator protein (329 aa).

Over 1–14 (MTTSINSVVTVFQN) the chain is Cytoplasmic. The chain crosses the membrane as a helical span at residues 15-35 (VFTNHGSTLLNGILIATTVGG). Topologically, residues 36–53 (QSLVRKLTFSCPCAYPLN) are extracellular. Residues 54–74 (IYHSLVFMFGPTAALLLIGIT) traverse the membrane as a helical segment. Residues 75 to 103 (VNSTTWKLAHGFFFRVRDTRHSWKTTCVS) lie on the Cytoplasmic side of the membrane. The chain crosses the membrane as a helical span at residues 104–124 (WIEVLIQSSVAPIAWLFVVFL). At 125–191 (DGGYYRCYRS…DASYLEAESQ (67 aa)) the chain is on the extracellular side. Residue Asn-148 is glycosylated (N-linked (GlcNAc...) asparagine). A helical transmembrane segment spans residues 192–212 (IYAWGLLLFSGVAAFLVITCN). Topologically, residues 213–329 (RMCDKYTLVQ…QIIVDETKED (117 aa)) are cytoplasmic.

Belongs to the CALHM family. As to expression, expressed in head and body wall muscles, IL2, ASG, ASI, ASJ, PHA and PHB sensory neurons, and spermatheca.

Its subcellular location is the cell membrane. Pore-forming subunit of a voltage-gated ion channel. Permeable to monovalent cations, divalent cations and anions with selectivity Ca(2+) &gt; Mg(2+) &gt; Na(+) = K(+) &gt; Cl(-). Acts both as a voltage-gated and calcium-activated ion channel. Required for normal locomotion. The sequence is that of Calcium homeostasis modulator protein from Caenorhabditis elegans.